A 417-amino-acid chain; its full sequence is UDP-N-acetylglucosamine 1-carboxyvinyltransferase (417 aa).

22 to 23 lines the phosphoenolpyruvate pocket; it reads KN. Arg93 provides a ligand contact to UDP-N-acetyl-alpha-D-glucosamine. Cys117 (proton donor) is an active-site residue. At Cys117 the chain carries 2-(S-cysteinyl)pyruvic acid O-phosphothioketal. UDP-N-acetyl-alpha-D-glucosamine-binding positions include 122–126, Asp304, and Ile326; that span reads RPVDQ.

This sequence belongs to the EPSP synthase family. MurA subfamily.

It is found in the cytoplasm. The enzyme catalyses phosphoenolpyruvate + UDP-N-acetyl-alpha-D-glucosamine = UDP-N-acetyl-3-O-(1-carboxyvinyl)-alpha-D-glucosamine + phosphate. It participates in cell wall biogenesis; peptidoglycan biosynthesis. Functionally, cell wall formation. Adds enolpyruvyl to UDP-N-acetylglucosamine. This chain is UDP-N-acetylglucosamine 1-carboxyvinyltransferase, found in Laribacter hongkongensis (strain HLHK9).